Here is a 265-residue protein sequence, read N- to C-terminus: Urease accessory protein UreH (265 aa).

Belongs to the UreD family. As to quaternary structure, ureH, UreF and UreG form a complex that acts as a GTP-hydrolysis-dependent molecular chaperone, activating the urease apoprotein by helping to assemble the nickel containing metallocenter of UreC. The UreE protein probably delivers the nickel.

Its subcellular location is the cytoplasm. Required for maturation of urease via the functional incorporation of the urease nickel metallocenter. This is Urease accessory protein UreH from Helicobacter pylori (strain HPAG1).